The primary structure comprises 347 residues: Quinolinate synthase (347 aa).

Residues His-47 and Ser-68 each contribute to the iminosuccinate site. Residue Cys-113 participates in [4Fe-4S] cluster binding. Iminosuccinate contacts are provided by residues 139 to 141 (YAN) and Ser-156. [4Fe-4S] cluster is bound at residue Cys-200. Residues 226 to 228 (HPE) and Thr-243 each bind iminosuccinate. Cys-297 contributes to the [4Fe-4S] cluster binding site.

It belongs to the quinolinate synthase family. Type 1 subfamily. It depends on [4Fe-4S] cluster as a cofactor.

It is found in the cytoplasm. It catalyses the reaction iminosuccinate + dihydroxyacetone phosphate = quinolinate + phosphate + 2 H2O + H(+). The protein operates within cofactor biosynthesis; NAD(+) biosynthesis; quinolinate from iminoaspartate: step 1/1. Functionally, catalyzes the condensation of iminoaspartate with dihydroxyacetone phosphate to form quinolinate. The sequence is that of Quinolinate synthase from Escherichia coli O127:H6 (strain E2348/69 / EPEC).